A 451-amino-acid polypeptide reads, in one-letter code: DNA polymerase IV (451 aa).

Residues 5–187 (VIHVDMDAFF…LPVGRLWGVG (183 aa)) form the UmuC domain. Mg(2+) contacts are provided by D9 and D104. The active site involves E105.

It belongs to the DNA polymerase type-Y family. Monomer. Requires Mg(2+) as cofactor.

Its subcellular location is the cytoplasm. The enzyme catalyses DNA(n) + a 2'-deoxyribonucleoside 5'-triphosphate = DNA(n+1) + diphosphate. Its function is as follows. Poorly processive, error-prone DNA polymerase involved in untargeted mutagenesis. Copies undamaged DNA at stalled replication forks, which arise in vivo from mismatched or misaligned primer ends. These misaligned primers can be extended by PolIV. Exhibits no 3'-5' exonuclease (proofreading) activity. May be involved in translesional synthesis, in conjunction with the beta clamp from PolIII. The chain is DNA polymerase IV from Corynebacterium diphtheriae (strain ATCC 700971 / NCTC 13129 / Biotype gravis).